Consider the following 86-residue polypeptide: Serine protease inhibitor Kazal-type 2 (86 aa).

The first 16 residues, 1–16, serve as a signal peptide directing secretion; the sequence is MLRLVLLLLATDFAAS. The region spanning 32-86 is the Kazal-like domain; the sequence is QFRTPDCHRFDYPVCSKHLSPVCGTDMNTYGNECTLCMKIREDGSHINIIKDEPC. 3 disulfide bridges follow: Cys38–Cys68, Cys46–Cys65, and Cys54–Cys86.

The protein resides in the secreted. It is found in the cytoplasmic vesicle. Its subcellular location is the secretory vesicle. The protein localises to the acrosome. In terms of biological role, as a strong inhibitor of acrosin, it is required for normal spermiogenesis. It probably hinders premature activation of proacrosin and other proteases, thus preventing the cascade of events leading to spermiogenesis defects. May be involved in the regulation of serine protease-dependent germ cell apoptosis. It also inhibits trypsin. The polypeptide is Serine protease inhibitor Kazal-type 2 (Spink2) (Rattus norvegicus (Rat)).